A 309-amino-acid chain; its full sequence is Tagatose-6-phosphate kinase (309 aa).

The protein belongs to the carbohydrate kinase PfkB family. LacC subfamily.

It catalyses the reaction D-tagatofuranose 6-phosphate + ATP = D-tagatofuranose 1,6-bisphosphate + ADP + H(+). Its pathway is carbohydrate metabolism; D-tagatose 6-phosphate degradation; D-glyceraldehyde 3-phosphate and glycerone phosphate from D-tagatose 6-phosphate: step 1/2. This is Tagatose-6-phosphate kinase from Streptococcus pneumoniae serotype 4 (strain ATCC BAA-334 / TIGR4).